The chain runs to 69 residues: MKPGIHPTYYHDAVVKCACGNTFITGSTKKEIRVEICSKCHPFFTGQQKIVDTGGRVERFRKRFNLEEK.

Zn(2+) is bound by residues Cys17, Cys19, Cys37, and Cys40.

It belongs to the bacterial ribosomal protein bL31 family. Type A subfamily. Part of the 50S ribosomal subunit. Zn(2+) serves as cofactor.

In terms of biological role, binds the 23S rRNA. This is Large ribosomal subunit protein bL31 from Caldanaerobacter subterraneus subsp. tengcongensis (strain DSM 15242 / JCM 11007 / NBRC 100824 / MB4) (Thermoanaerobacter tengcongensis).